We begin with the raw amino-acid sequence, 619 residues long: Nuclear hormone receptor family member nhr-6 (619 aa).

Residues 1–18 (MEQLSIQTDELQDQFSNC) are compositionally biased toward polar residues. 4 disordered regions span residues 1-29 (MEQL…SYSS), 58-86 (MSKN…SKTT), 103-134 (QVNT…HRLP), and 196-232 (QHFP…PTSP). Positions 19-29 (SPASVDSSYSS) are enriched in low complexity. A compositionally biased stretch (polar residues) spans 125-134 (KPSSSSHRLP). Residues 206-232 (GSQGTTSSSNNTGGTPSPHSSSLPTSP) are compositionally biased toward low complexity. Residues 265–340 (DKMCAVCNDR…VGMVKEIVRH (76 aa)) constitute a DNA-binding region (nuclear receptor). NR C4-type zinc fingers lie at residues 268-288 (CAVC…CEGC) and 304-328 (CAGN…YQKC). Residues 345–365 (GRRGRLSSKTKLARSEDQPSP) form a disordered region. Basic residues predominate over residues 346 to 356 (RRGRLSSKTKL). The NR LBD domain occupies 365–600 (PPLPLLALMG…STDAPPACGS (236 aa)). The interval 589–600 (LRSTDAPPACGS) is AF-2.

It belongs to the nuclear hormone receptor family. NR4 subfamily. In terms of tissue distribution, in hermaphrodites, expressed in the developing spermatheca and dorsal uterus. Expression includes the 8 cells of the dorsal somatic gonad primordium and the sujc cells that form the core of the spermatheca-uterine valve. Expressed in the precursor cells of the spermatheca-sheath lineages (SS cells) and in the precursors and descendents of the dorsal-uterine lineage (DU cells). In both hermaphroditic and male animals, expressed in a pair of head chemosensory neurons.

It localises to the nucleus. Transcriptional activator that induces gene expression by binding to the NGFI-B response element (NBRE) 5'-AAAGGTCA-3'. Required for proper morphogenesis of the spermatheca and the spermatheca-uterine valve formation. Promotes cell proliferation and differentiation of the spermatheca precursor cells during spermatheca development in larval stage L4. Might play a role in promoting G1/S phase progression in the spermatheca precursor cell lineage. Also required for the differentiation of the spermatheca-uterine junction core (sujc) cells which are generating the spermatheca-uterine valve. The chain is Nuclear hormone receptor family member nhr-6 (nhr-6) from Caenorhabditis elegans.